The chain runs to 137 residues: Acetyltransferase Atu2258 (137 aa).

Positions 1–137 constitute an N-acetyltransferase domain; sequence MNFVLSDVAD…QSITWLEKRF (137 aa). Residues 66 to 68, G74, and 108 to 110 each bind CoA; these read LFV and RTY.

Functionally, catalyzes the transfer of an acetyl group from acetyl coenzyme A (AcCoA) to an acceptor substrate and releases both CoA and the acetylated product. It prefers glucosamine 6-phosphate or dopamine. It can also use the thialysine, N(8)-acetylspermidine, chloramphenicol, puromycin, polymyxin B, and 4-aminobutyrate ethyl ester. In Agrobacterium fabrum (strain C58 / ATCC 33970) (Agrobacterium tumefaciens (strain C58)), this protein is Acetyltransferase Atu2258.